The sequence spans 368 residues: Phosphate acyltransferase (368 aa).

It belongs to the PlsX family. As to quaternary structure, homodimer. Probably interacts with PlsY.

Its subcellular location is the cytoplasm. It carries out the reaction a fatty acyl-[ACP] + phosphate = an acyl phosphate + holo-[ACP]. It participates in lipid metabolism; phospholipid metabolism. Its function is as follows. Catalyzes the reversible formation of acyl-phosphate (acyl-PO(4)) from acyl-[acyl-carrier-protein] (acyl-ACP). This enzyme utilizes acyl-ACP as fatty acyl donor, but not acyl-CoA. This is Phosphate acyltransferase from Cereibacter sphaeroides (strain ATCC 17025 / ATH 2.4.3) (Rhodobacter sphaeroides).